Reading from the N-terminus, the 493-residue chain is Glycerol kinase (493 aa).

Threonine 11 contributes to the ADP binding site. ATP-binding residues include threonine 11, threonine 12, and serine 13. Sn-glycerol 3-phosphate is bound at residue threonine 11. Arginine 15 is a binding site for ADP. Sn-glycerol 3-phosphate contacts are provided by arginine 80, glutamate 81, tyrosine 132, and aspartate 241. Glycerol contacts are provided by arginine 80, glutamate 81, tyrosine 132, aspartate 241, and glutamine 242. ADP contacts are provided by threonine 263 and glycine 306. Residues threonine 263, glycine 306, glutamine 310, and glycine 408 each contribute to the ATP site. ADP is bound at residue glycine 408.

The protein belongs to the FGGY kinase family.

The enzyme catalyses glycerol + ATP = sn-glycerol 3-phosphate + ADP + H(+). It functions in the pathway polyol metabolism; glycerol degradation via glycerol kinase pathway; sn-glycerol 3-phosphate from glycerol: step 1/1. With respect to regulation, inhibited by fructose 1,6-bisphosphate (FBP). In terms of biological role, key enzyme in the regulation of glycerol uptake and metabolism. Catalyzes the phosphorylation of glycerol to yield sn-glycerol 3-phosphate. This is Glycerol kinase from Cereibacter sphaeroides (strain ATCC 17029 / ATH 2.4.9) (Rhodobacter sphaeroides).